We begin with the raw amino-acid sequence, 501 residues long: Aromatase 3 (501 aa).

C435 provides a ligand contact to heme.

This sequence belongs to the cytochrome P450 family. Heme serves as cofactor. Ovary.

The protein resides in the membrane. It carries out the reaction testosterone + 3 reduced [NADPH--hemoprotein reductase] + 3 O2 = 17beta-estradiol + formate + 3 oxidized [NADPH--hemoprotein reductase] + 4 H2O + 4 H(+). The enzyme catalyses androst-4-ene-3,17-dione + 3 reduced [NADPH--hemoprotein reductase] + 3 O2 = estrone + formate + 3 oxidized [NADPH--hemoprotein reductase] + 4 H2O + 4 H(+). Its function is as follows. Catalyzes the formation of aromatic C18 estrogens from C19 androgens. In Sus scrofa (Pig), this protein is Aromatase 3 (CYP19A3).